Here is a 131-residue protein sequence, read N- to C-terminus: Fluoride-specific ion channel FluC 2 (131 aa).

Helical transmembrane passes span serine 5–isoleucine 25, tryptophan 35–glycine 55, proline 59–phenylalanine 79, and leucine 95–valine 115. Glycine 71 and threonine 74 together coordinate Na(+).

The protein belongs to the fluoride channel Fluc/FEX (TC 1.A.43) family.

It localises to the cell membrane. The catalysed reaction is fluoride(in) = fluoride(out). With respect to regulation, na(+) is not transported, but it plays an essential structural role and its presence is essential for fluoride channel function. Its function is as follows. Fluoride-specific ion channel. Important for reducing fluoride concentration in the cell, thus reducing its toxicity. This chain is Fluoride-specific ion channel FluC 2, found in Bacillus subtilis (strain 168).